The sequence spans 244 residues: Gas vesicle protein F (244 aa).

The interval 1-109 is N-terminus; the sequence is MTVGLYLYGI…QLKELFAKLS (109 aa). Residues 110 to 233 form a C-terminus, modifed ferredoxin fold region; it reads GQREVSIKIF…GDRLRIRYNN (124 aa). Residues 234 to 244 form a C-tail region; it reads LTAPYTFAQLI.

Belongs to the gas vesicle GvpF/GvpL family. Binds GvpA.

The protein localises to the gas vesicle. Functionally, a minor component of the gas vesicle, may be involved in preventing GvpA aggregation during gas vesicle nucleation. Gas vesicles (GV) are hollow, gas filled proteinaceous nanostructures. During planktonic growth they allow positioning of the organism at a favorable depth for light or nutrient acquisition. In Microcystis aeruginosa (strain PCC 7806), this protein is Gas vesicle protein F.